We begin with the raw amino-acid sequence, 553 residues long: Sensitive to high expression protein 9 homolog, mitochondrial (553 aa).

The disordered stretch occupies residues 61-174; sequence FFSTQPPKDT…TAQPELPSRT (114 aa). Over residues 62 to 84 the composition is skewed to polar residues; sequence FSTQPPKDTPENMNNKETGSSNV. Residues 103–116 are compositionally biased toward basic and acidic residues; sequence AKEDTTDATNKSET. A compositionally biased stretch (low complexity) spans 133 to 160; the sequence is SDVSSASTSDSANSSETTTTTSETTPEN. 2 coiled-coil regions span residues 210–241 and 277–309; these read SAIE…HNYK and RLDH…DLNA. Residues 331-351 form a helical membrane-spanning segment; that stretch reads WGTWGLMGVNVLLFLVLQFVA. Residues 352–523 are Mitochondrial intermembrane-facing; it reads EPWRRKRLMK…RIDLKMRDVS (172 aa). 2 disordered regions span residues 408 to 428 and 443 to 497; these read ALAS…RTEG and AEEA…QTLS. 2 stretches are compositionally biased toward low complexity: residues 443 to 473 and 484 to 495; these read AEEA…QTPE and TWKQTAQKWQQT. Residues 524 to 544 traverse the membrane as a helical segment; the sequence is LLALESAATGAAVVASVAFFV. At 545 to 553 the chain is on the mitochondrial matrix side; it reads LRSSGSGKA.

Belongs to the SHE9 family. Homooligomer.

The protein resides in the mitochondrion inner membrane. Required for the maintenance of the structure of the mitochondrial inner membrane. Involved in mitochondrial morphology. Causes growth arrest when highly overexpressed. In Neurospora crassa (strain ATCC 24698 / 74-OR23-1A / CBS 708.71 / DSM 1257 / FGSC 987), this protein is Sensitive to high expression protein 9 homolog, mitochondrial (she-9).